A 121-amino-acid chain; its full sequence is Large ribosomal subunit protein bL20 (121 aa).

Belongs to the bacterial ribosomal protein bL20 family.

In terms of biological role, binds directly to 23S ribosomal RNA and is necessary for the in vitro assembly process of the 50S ribosomal subunit. It is not involved in the protein synthesizing functions of that subunit. The protein is Large ribosomal subunit protein bL20 of Wolbachia sp. subsp. Brugia malayi (strain TRS).